The primary structure comprises 958 residues: Structure-specific endonuclease subunit SLX4 (958 aa).

6 disordered regions span residues 89–123, 183–209, 326–400, 531–589, 594–613, and 655–849; these read AESPIKSGVEGPTLPLGGDKKKPRTAGARKKKGKT, QKKAETVSRHFTPHTSAPPELVAGPID, LATA…LSPT, DLTI…EQHQ, QSNTPQQPQPAPPPPPSFEL, and STAA…SPPA. The segment covering 109-121 has biased composition (basic residues); the sequence is KKPRTAGARKKKG. Basic and acidic residues predominate over residues 332–341; the sequence is RRPEEAERST. A compositionally biased stretch (polar residues) spans 342-351; it reads LSRQQDTHIP. The span at 364 to 373 shows a compositional bias: low complexity; sequence AASKSASAKP. Residues 374-389 are compositionally biased toward basic residues; that stretch reads KAAKKAPKPRATKKKQ. Positions 600–610 are enriched in pro residues; sequence QPQPAPPPPPS. Low complexity-rich tracts occupy residues 655-666, 775-787, and 821-838; these read STAAQAAMSTSA, TTSPATRATRAKA, and PDSGSDDPFASSAPSSPD.

It belongs to the SLX4 family. As to quaternary structure, forms a heterodimer with SLX1. In terms of processing, phosphorylated in response to DNA damage.

The protein localises to the nucleus. Functionally, regulatory subunit of the SLX1-SLX4 structure-specific endonuclease that resolves DNA secondary structures generated during DNA repair and recombination. Has endonuclease activity towards branched DNA substrates, introducing single-strand cuts in duplex DNA close to junctions with ss-DNA. In Chaetomium globosum (strain ATCC 6205 / CBS 148.51 / DSM 1962 / NBRC 6347 / NRRL 1970) (Soil fungus), this protein is Structure-specific endonuclease subunit SLX4.